The following is a 293-amino-acid chain: Protease HtpX (293 aa).

2 consecutive transmembrane segments (helical) span residues 4–24 (IALF…VLSL) and 34–54 (GLMI…LLMS). Position 139 (histidine 139) interacts with Zn(2+). Glutamate 140 is an active-site residue. Residue histidine 143 participates in Zn(2+) binding. Transmembrane regions (helical) follow at residues 158 to 178 (VVNT…AGFM) and 193 to 213 (LIYF…ASII). A Zn(2+)-binding site is contributed by glutamate 222.

It belongs to the peptidase M48B family. Zn(2+) is required as a cofactor.

It localises to the cell inner membrane. This is Protease HtpX from Escherichia fergusonii (strain ATCC 35469 / DSM 13698 / CCUG 18766 / IAM 14443 / JCM 21226 / LMG 7866 / NBRC 102419 / NCTC 12128 / CDC 0568-73).